The primary structure comprises 629 residues: Arginyl-tRNA--protein transferase 1 (629 aa).

Disordered stretches follow at residues 274 to 298 (QNNS…TNEP) and 353 to 405 (PDES…ITKE). The span at 282-295 (TTTATTATTTTTTT) shows a compositional bias: low complexity. Residues 356 to 396 (SYDDYVYDGKDDDDDDDDKDEKEDDEDEDQEDDEDEDDGNN) show a composition bias toward acidic residues.

This sequence belongs to the R-transferase family.

It carries out the reaction an N-terminal L-alpha-aminoacyl-[protein] + L-arginyl-tRNA(Arg) = an N-terminal L-arginyl-L-aminoacyl-[protein] + tRNA(Arg) + H(+). Functionally, involved in the post-translational conjugation of arginine to the N-terminal aspartate or glutamate of a protein. This arginylation is required for degradation of the protein via the ubiquitin pathway. Does not arginylate cysteine residues. The polypeptide is Arginyl-tRNA--protein transferase 1 (ate1) (Dictyostelium discoideum (Social amoeba)).